The chain runs to 247 residues: UDP-2,3-diacylglucosamine hydrolase (247 aa).

Residues Asp8, His10, Asp41, Asn79, and His115 each coordinate Mn(2+). Residue 79–80 (NH) coordinates substrate. 4 residues coordinate substrate: Asp123, Lys165, Lys168, and His196. Mn(2+)-binding residues include His196 and His198.

It belongs to the LpxH family. Mn(2+) serves as cofactor.

It is found in the cell inner membrane. The catalysed reaction is UDP-2-N,3-O-bis[(3R)-3-hydroxytetradecanoyl]-alpha-D-glucosamine + H2O = 2-N,3-O-bis[(3R)-3-hydroxytetradecanoyl]-alpha-D-glucosaminyl 1-phosphate + UMP + 2 H(+). Its pathway is glycolipid biosynthesis; lipid IV(A) biosynthesis; lipid IV(A) from (3R)-3-hydroxytetradecanoyl-[acyl-carrier-protein] and UDP-N-acetyl-alpha-D-glucosamine: step 4/6. Functionally, hydrolyzes the pyrophosphate bond of UDP-2,3-diacylglucosamine to yield 2,3-diacylglucosamine 1-phosphate (lipid X) and UMP by catalyzing the attack of water at the alpha-P atom. Involved in the biosynthesis of lipid A, a phosphorylated glycolipid that anchors the lipopolysaccharide to the outer membrane of the cell. This is UDP-2,3-diacylglucosamine hydrolase from Blochmanniella floridana.